A 205-amino-acid chain; its full sequence is Holliday junction branch migration complex subunit RuvA (205 aa).

Residues 1–64 (MIGKLKGILE…EEAIRLFGFV (64 aa)) are domain I. The segment at 65-143 (AKAEQEWFCL…PFNDNALHFT (79 aa)) is domain II. The segment at 144–149 (PQPHLE) is flexible linker. A domain III region spans residues 150–205 (VTHQPTNDALSALVKLGFERDQAARALALAMNALEGETVSSALLIRHSLKLLSPST).

Belongs to the RuvA family. Homotetramer. Forms an RuvA(8)-RuvB(12)-Holliday junction (HJ) complex. HJ DNA is sandwiched between 2 RuvA tetramers; dsDNA enters through RuvA and exits via RuvB. An RuvB hexamer assembles on each DNA strand where it exits the tetramer. Each RuvB hexamer is contacted by two RuvA subunits (via domain III) on 2 adjacent RuvB subunits; this complex drives branch migration. In the full resolvosome a probable DNA-RuvA(4)-RuvB(12)-RuvC(2) complex forms which resolves the HJ.

The protein resides in the cytoplasm. The RuvA-RuvB-RuvC complex processes Holliday junction (HJ) DNA during genetic recombination and DNA repair, while the RuvA-RuvB complex plays an important role in the rescue of blocked DNA replication forks via replication fork reversal (RFR). RuvA specifically binds to HJ cruciform DNA, conferring on it an open structure. The RuvB hexamer acts as an ATP-dependent pump, pulling dsDNA into and through the RuvAB complex. HJ branch migration allows RuvC to scan DNA until it finds its consensus sequence, where it cleaves and resolves the cruciform DNA. The sequence is that of Holliday junction branch migration complex subunit RuvA from Bartonella quintana (strain Toulouse) (Rochalimaea quintana).